The primary structure comprises 119 residues: Immunoglobulin heavy variable 2-26 (119 aa).

The signal sequence occupies residues 1 to 19; it reads MDTLCYTLLLLTTPSWVLS. The residue at position 20 (Q20) is a Pyrrolidone carboxylic acid. The interval 20–44 is framework-1; sequence QVTLKESGPVLVKPTETLTLTCTVS. Residues 20–119 enclose the Ig-like domain; that stretch reads QVTLKESGPV…DTATYYCARI (100 aa). The cysteines at positions 41 and 116 are disulfide-linked. Residues 45-54 are complementarity-determining-1; sequence GFSLSNARMG. The framework-2 stretch occupies residues 55 to 71; that stretch reads VSWIRQPPGKALEWLAH. Residues 72-78 are complementarity-determining-2; it reads IFSNDEK. A framework-3 region spans residues 79 to 116; that stretch reads SYSTSLKSRLTISKDTSKSQVVLTMTNMDPVDTATYYC. Residues 117–119 form a complementarity-determining-3 region; sequence ARI.

As to quaternary structure, immunoglobulins are composed of two identical heavy chains and two identical light chains; disulfide-linked.

Its subcellular location is the secreted. The protein localises to the cell membrane. V region of the variable domain of immunoglobulin heavy chains that participates in the antigen recognition. Immunoglobulins, also known as antibodies, are membrane-bound or secreted glycoproteins produced by B lymphocytes. In the recognition phase of humoral immunity, the membrane-bound immunoglobulins serve as receptors which, upon binding of a specific antigen, trigger the clonal expansion and differentiation of B lymphocytes into immunoglobulins-secreting plasma cells. Secreted immunoglobulins mediate the effector phase of humoral immunity, which results in the elimination of bound antigens. The antigen binding site is formed by the variable domain of one heavy chain, together with that of its associated light chain. Thus, each immunoglobulin has two antigen binding sites with remarkable affinity for a particular antigen. The variable domains are assembled by a process called V-(D)-J rearrangement and can then be subjected to somatic hypermutations which, after exposure to antigen and selection, allow affinity maturation for a particular antigen. This is Immunoglobulin heavy variable 2-26 from Homo sapiens (Human).